The primary structure comprises 793 residues: Plakophilin-3 (793 aa).

The interval 56-82 (QLGQQPRHNGPAEPDGAAEAARGASRA) is disordered. Over residues 66–82 (PAEPDGAAEAARGASRA) the composition is skewed to low complexity. At arginine 81 the chain carries Omega-N-methylarginine. 3 positions are modified to phosphoserine: serine 122, serine 179, and serine 182. Tyrosine 194 is subject to Phosphotyrosine. The segment at 221–240 (SSSRAGGLDWPEATEGPPSR) is disordered. Serine 239 is modified (phosphoserine). Threonine 249 carries the phosphothreonine modification. Omega-N-methylarginine is present on arginine 260. Phosphoserine is present on residues serine 282, serine 310, serine 311, and serine 328. The segment at 282–285 (SLSL) is required for interaction with SFN. The interval 291–720 (LPDMRGLDSY…ADVLINIIAV (430 aa)) is required for interaction with GSK3B. ARM repeat units lie at residues 302–345 (GHRT…HKCY), 348–387 (AAAKKQARSLQAVPRLVKLFNHANQEVQRHATGAMRNLVY), 390–429 (ADNKLALVEENGIFELLRALREQDDELRKNVTGILWNLSS), 446–484 (TDLVLSPLSGAGGPPLIQQNASEAEIFYNATGFLRNLSS), 488–533 (ATRQ…NLSY), 592–633 (PKGL…NITA), 641–680 (VLSRLALEQERILNPLLDRVRTADHHQLRSLTGLIRNLSR), and 685–726 (KDEM…NLVV). Positions 513–793 (VGKCEDKSVE…GYRKEDFLGP (281 aa)) are required for binding to PKP2 mRNA.

It belongs to the beta-catenin family. As to quaternary structure, found in a complex composed of CDH1, RAP1A and PKP3; PKP3 acts as a scaffold protein within the complex, the complex is required for CDH1 localization to mature desmosome cell junctions. Interacts with FXR1; the interaction facilitates the binding of PKP3 to PKP2 mRNA. Interacts (via ARM repeats) with GSK3B; the interaction may be involved in PKP3 protein degradation. Interacts with hyperphosphorylated and hypophosphorylated RB1; the interaction inhibits RB1 interaction with and repression of the transcription factor E2F1, potentially via sequestering RB1 to the cytoplasm. Interacts with CDKN1A; the interaction sequesters CDKN1A to the cytoplasm thereby repressing its role as an inhibitor of CDK4- and CDK6-driven RB1 phosphorylation. Interacts (via N-terminus) with SFN; the interaction maintains the cytoplasmic pool of PKP3, facilitates PKP3 exchange at desmosomes and restricts PKP3 localization to existing desmosome cell junctions. Interacts (via N-terminus) with SFN; the interaction maintains the cytoplasmic pool of PKP3 and restricts PKP3 localization to existing desmosome cell junctions. Interacts (via N-terminus) with JUP; the interaction is required for PKP3 localization to desmosome cell-cell junctions. In terms of processing, phosphorylated at Ser-282 when localized to the cytoplasm, PKP3 at desmosome cell junctions is not phosphorylated. Phosphorylation at Try-194 by SRC is induced by reactive oxygen species and potentially acts as a release mechanism from desmosome cell-cell junctions.

It localises to the nucleus. It is found in the cell junction. The protein localises to the desmosome. Its subcellular location is the cytoplasm. The protein resides in the cell membrane. It localises to the adherens junction. Functionally, a component of desmosome cell-cell junctions which are required for positive regulation of cellular adhesion. Required for the localization of DSG2, DSP and PKP2 to mature desmosome junctions. May also play a role in the maintenance of DSG3 protein abundance in keratinocytes. Required for the formation of DSP-containing desmosome precursors in the cytoplasm during desmosome assembly. Also regulates the accumulation of CDH1 to mature desmosome junctions, via cAMP-dependent signaling and its interaction with activated RAP1A. Positively regulates the stabilization of PKP2 mRNA and therefore protein abundance, via its interaction with FXR1, may also regulate the protein abundance of DSP via the same mechanism. May also regulate the protein abundance of the desmosome component PKP1. Required for the organization of desmosome junctions at intercellular borders between basal keratinocytes of the epidermis, as a result plays a role in maintenance of the dermal barrier and regulation of the dermal inflammatory response. Required during epidermal keratinocyte differentiation for cell adherence at tricellular cell-cell contacts, via regulation of the timely formation of adherens junctions and desmosomes in a calcium-dependent manner, and may also play a role in the organization of the intracellular actin fiber belt. Acts as a negative regulator of the inflammatory response in hematopoietic cells of the skin and intestine, via modulation of proinflammatory cytokine production. Important for epithelial barrier maintenance in the intestine to reduce intestinal permeability, thereby plays a role in protection from intestinal-derived endotoxemia. Required for the development of hair follicles, via a role in the regulation of inner root sheaf length, correct alignment and anterior-posterior polarity of hair follicles. Promotes proliferation and cell-cycle G1/S phase transition of keratinocytes. Promotes E2F1-driven transcription of G1/S phase promoting genes by acting to release E2F1 from its inhibitory interaction with RB1, via sequestering RB1 and CDKN1A to the cytoplasm and thereby increasing CDK4- and CDK6-driven phosphorylation of RB1. May act as a scaffold protein to facilitate MAPK phosphorylation of RPS6KA protein family members and subsequently promote downstream EGFR signaling. May play a role in the positive regulation of transcription of Wnt-mediated TCF-responsive target genes. The polypeptide is Plakophilin-3 (PKP3) (Bos taurus (Bovine)).